The following is an 89-amino-acid chain: Small ribosomal subunit protein uS17 (89 aa).

This sequence belongs to the universal ribosomal protein uS17 family. In terms of assembly, part of the 30S ribosomal subunit.

One of the primary rRNA binding proteins, it binds specifically to the 5'-end of 16S ribosomal RNA. This is Small ribosomal subunit protein uS17 from Bacteroides fragilis (strain ATCC 25285 / DSM 2151 / CCUG 4856 / JCM 11019 / LMG 10263 / NCTC 9343 / Onslow / VPI 2553 / EN-2).